Consider the following 78-residue polypeptide: Exodeoxyribonuclease 7 small subunit (78 aa).

Belongs to the XseB family. In terms of assembly, heterooligomer composed of large and small subunits.

It localises to the cytoplasm. It carries out the reaction Exonucleolytic cleavage in either 5'- to 3'- or 3'- to 5'-direction to yield nucleoside 5'-phosphates.. Its function is as follows. Bidirectionally degrades single-stranded DNA into large acid-insoluble oligonucleotides, which are then degraded further into small acid-soluble oligonucleotides. The chain is Exodeoxyribonuclease 7 small subunit from Finegoldia magna (strain ATCC 29328 / DSM 20472 / WAL 2508) (Peptostreptococcus magnus).